Consider the following 249-residue polypeptide: Proteasome subunit alpha (249 aa).

Positions Glu229–Asp249 are disordered.

It belongs to the peptidase T1A family. In terms of assembly, the 20S proteasome core is composed of 14 alpha and 14 beta subunits that assemble into four stacked heptameric rings, resulting in a barrel-shaped structure. The two inner rings, each composed of seven catalytic beta subunits, are sandwiched by two outer rings, each composed of seven alpha subunits. The catalytic chamber with the active sites is on the inside of the barrel. Has a gated structure, the ends of the cylinder being occluded by the N-termini of the alpha-subunits. Is capped by the proteasome-associated ATPase, ARC.

It localises to the cytoplasm. Its pathway is protein degradation; proteasomal Pup-dependent pathway. The formation of the proteasomal ATPase ARC-20S proteasome complex, likely via the docking of the C-termini of ARC into the intersubunit pockets in the alpha-rings, may trigger opening of the gate for substrate entry. Interconversion between the open-gate and close-gate conformations leads to a dynamic regulation of the 20S proteasome proteolysis activity. Its function is as follows. Component of the proteasome core, a large protease complex with broad specificity involved in protein degradation. The protein is Proteasome subunit alpha of Thermobifida fusca (strain YX).